We begin with the raw amino-acid sequence, 239 residues long: MAATASSLTIASSFSEPRTQIHSSRRLNLPLQYSIPYKVLRSRSRRLGLVVSSVSAPNVELRTGPDDLISTLLSKVANSDGGVTLSPEQHKEVAQVAGELQKYCVKEPVKNPLIFGDWEVVYCSRPTSPGGGYRSVIGRLFFKTKEMIQAIDAPDIVRNKVSINAFGFLDGDVSLTGKLKALDSEWVQVIFEPPEIKVGSLEFKYGFESEVKLRITYVDEKLRLGLGSKGSLFVFRRRQ.

The N-terminal 52 residues, 1 to 52 (MAATASSLTIASSFSEPRTQIHSSRRLNLPLQYSIPYKVLRSRSRRLGLVVS), are a transit peptide targeting the chloroplast. S53 is subject to N-acetylserine.

Belongs to the PAP/fibrillin family.

The protein localises to the plastid. The protein resides in the chloroplast. This is Probable plastid-lipid-associated protein 8, chloroplastic (PAP8) from Arabidopsis thaliana (Mouse-ear cress).